The chain runs to 495 residues: ATP synthase subunit alpha, chloroplastic (495 aa).

Gly170–Thr177 contributes to the ATP binding site.

It belongs to the ATPase alpha/beta chains family. F-type ATPases have 2 components, CF(1) - the catalytic core - and CF(0) - the membrane proton channel. CF(1) has five subunits: alpha(3), beta(3), gamma(1), delta(1), epsilon(1). CF(0) has four main subunits: a, b, b' and c.

The protein localises to the plastid. Its subcellular location is the chloroplast thylakoid membrane. The catalysed reaction is ATP + H2O + 4 H(+)(in) = ADP + phosphate + 5 H(+)(out). Produces ATP from ADP in the presence of a proton gradient across the membrane. The alpha chain is a regulatory subunit. This is ATP synthase subunit alpha, chloroplastic from Cyanidioschyzon merolae (strain NIES-3377 / 10D) (Unicellular red alga).